The chain runs to 135 residues: Hemoglobin subunit beta-2 (135 aa).

Residues 2 to 135 (HWTAEEKALV…VVDALSKGYH (134 aa)) enclose the Globin domain. 2 residues coordinate heme b: H57 and H81.

It belongs to the globin family. As to quaternary structure, hb 2 is a heterotetramer of two alpha and two beta-2 chains. Red blood cells (at protein level).

Functionally, involved in oxygen transport from gills to the various peripheral tissues. The protein is Hemoglobin subunit beta-2 of Somniosus microcephalus (Greenland sleeper shark).